The sequence spans 213 residues: 3-demethoxyubiquinol 3-hydroxylase (213 aa).

E62, E92, H95, E144, E176, and H179 together coordinate Fe cation.

The protein belongs to the COQ7 family. Fe cation is required as a cofactor.

It localises to the cell membrane. It catalyses the reaction a 5-methoxy-2-methyl-3-(all-trans-polyprenyl)benzene-1,4-diol + AH2 + O2 = a 3-demethylubiquinol + A + H2O. It functions in the pathway cofactor biosynthesis; ubiquinone biosynthesis. In terms of biological role, catalyzes the hydroxylation of 2-nonaprenyl-3-methyl-6-methoxy-1,4-benzoquinol during ubiquinone biosynthesis. This is 3-demethoxyubiquinol 3-hydroxylase from Legionella pneumophila (strain Paris).